A 189-amino-acid polypeptide reads, in one-letter code: Interferon alpha-7 (189 aa).

Residues 1 to 23 (MARSFSLLMVVLVLSYKSICSLG) form the signal peptide. 2 disulfides stabilise this stretch: C24–C122 and C52–C162.

It belongs to the alpha/beta interferon family.

Its subcellular location is the secreted. Its function is as follows. Produced by macrophages, IFN-alpha have antiviral activities. Interferon stimulates the production of two enzymes: a protein kinase and an oligoadenylate synthetase. This is Interferon alpha-7 (IFNA7) from Homo sapiens (Human).